The chain runs to 319 residues: MHYFNRAKKAKNNEFYTLFEDIAAEVACYPNAFKGKVVLCNCNDGYQSNFWQFFQSQFHALGLKKLVAIAFNPLGNSYQLNFDGKEIKELPLAGNGSFDSAEAIVLLKQSDIVVTNPPFSLFQDFVCLLAEHGKQFLVLGHNGAVGYNQIFKLFKEEQLWYGHTVNSSMLFQVQSNFKLYDPKSVNFVKKDGQLFQKVPGISWFTNLKKNQQPAWLKTKSRYQGNEHKYPKFDWYDAIFVSKVKEIPLDWFGYMGVPLTFLNCFNPKQFELIDCLANPYATLDTLKTNAYVRSHHGDVRNVKGKRRYVRVVIKQRQNVI.

Belongs to the N(4)/N(6)-methyltransferase family.

It carries out the reaction a 2'-deoxyadenosine in DNA + S-adenosyl-L-methionine = an N(6)-methyl-2'-deoxyadenosine in DNA + S-adenosyl-L-homocysteine + H(+). Functionally, a methylase that recognizes the double-stranded sequence 5'-CTAT-3' and methylates A-3 on one strand; probably responsible for all of the methylation on this site in the genome. The chain is Type II methyltransferase M.MpnI from Mycoplasma pneumoniae (strain ATCC 29342 / M129 / Subtype 1) (Mycoplasmoides pneumoniae).